The primary structure comprises 382 residues: Succinate--CoA ligase [ADP-forming] subunit beta (382 aa).

The region spanning lysine 9–tyrosine 240 is the ATP-grasp domain. Residues lysine 45, glycine 52–glycine 54, valine 94, and glutamate 99 contribute to the ATP site. Mg(2+)-binding residues include asparagine 193 and aspartate 207. Substrate-binding positions include asparagine 260 and glycine 317–threonine 319.

It belongs to the succinate/malate CoA ligase beta subunit family. As to quaternary structure, heterotetramer of two alpha and two beta subunits. The cofactor is Mg(2+).

The catalysed reaction is succinate + ATP + CoA = succinyl-CoA + ADP + phosphate. The enzyme catalyses GTP + succinate + CoA = succinyl-CoA + GDP + phosphate. Its pathway is carbohydrate metabolism; tricarboxylic acid cycle; succinate from succinyl-CoA (ligase route): step 1/1. Its function is as follows. Succinyl-CoA synthetase functions in the citric acid cycle (TCA), coupling the hydrolysis of succinyl-CoA to the synthesis of either ATP or GTP and thus represents the only step of substrate-level phosphorylation in the TCA. The beta subunit provides nucleotide specificity of the enzyme and binds the substrate succinate, while the binding sites for coenzyme A and phosphate are found in the alpha subunit. The sequence is that of Succinate--CoA ligase [ADP-forming] subunit beta from Pyrobaculum islandicum (strain DSM 4184 / JCM 9189 / GEO3).